The following is a 186-amino-acid chain: MSSNNVVIKIAQPYAVALLDLAKTKKVTEKVSQDIQSIQNILAQSDKLKIFLANPLKTVEAKKEVIIATVGDQINENTLSFLMILVDRKRIGMLDAIASKYLELAYQMESLTIANINTSIALSPDQETLLTEKIKVMTKAKEVKLIISVEPELIGGFTIQIGSKVIDTSIRGQLRQMASHLDVVVT.

This sequence belongs to the ATPase delta chain family. In terms of assembly, F-type ATPases have 2 components, F(1) - the catalytic core - and F(0) - the membrane proton channel. F(1) has five subunits: alpha(3), beta(3), gamma(1), delta(1), epsilon(1). CF(0) has four main subunits: a(1), b(1), b'(1) and c(10-14). The alpha and beta chains form an alternating ring which encloses part of the gamma chain. F(1) is attached to F(0) by a central stalk formed by the gamma and epsilon chains, while a peripheral stalk is formed by the delta, b and b' chains.

The protein localises to the plastid. It localises to the chloroplast thylakoid membrane. In terms of biological role, f(1)F(0) ATP synthase produces ATP from ADP in the presence of a proton or sodium gradient. F-type ATPases consist of two structural domains, F(1) containing the extramembraneous catalytic core and F(0) containing the membrane proton channel, linked together by a central stalk and a peripheral stalk. During catalysis, ATP synthesis in the catalytic domain of F(1) is coupled via a rotary mechanism of the central stalk subunits to proton translocation. This protein is part of the stalk that links CF(0) to CF(1). It either transmits conformational changes from CF(0) to CF(1) or is implicated in proton conduction. The sequence is that of ATP synthase subunit delta, chloroplastic from Pyropia yezoensis (Susabi-nori).